Consider the following 586-residue polypeptide: uncharacterized protein (586 aa).

Coiled-coil stretches lie at residues 183 to 293 (THTE…ELEN) and 331 to 400 (FKDK…DKKN).

This is an uncharacterized protein from Bacillus subtilis (strain 168).